A 535-amino-acid chain; its full sequence is uncharacterized protein (535 aa).

Residues 8-24 (LVVFGSLVFFFGLVKYF) traverse the membrane as a helical segment. Lys50 participates in a covalent cross-link: Glycyl lysine isopeptide (Lys-Gly) (interchain with G-Cter in ubiquitin). The Mn(2+) site is built by Asp316, Asp327, His412, Glu452, and Glu493.

Belongs to the peptidase M24B family. Requires Mn(2+) as cofactor.

It localises to the membrane. This is an uncharacterized protein from Saccharomyces cerevisiae (strain ATCC 204508 / S288c) (Baker's yeast).